Here is a 79-residue protein sequence, read N- to C-terminus: UPF0180 protein BCG9842_B3897 (79 aa).

Belongs to the UPF0180 family.

The sequence is that of UPF0180 protein BCG9842_B3897 from Bacillus cereus (strain G9842).